Consider the following 399-residue polypeptide: [Pyruvate dehydrogenase (acetyl-transferring)] kinase, mitochondrial (399 aa).

The transit peptide at 1–18 (MFLTRRLLGPFTSAIARK) directs the protein to the mitochondrion. A Histidine kinase domain is found at 123-360 (VVETMAEGLI…DAMIFLKAIP (238 aa)). ATP is bound by residues 247–254 (ELFKNSMR), aspartate 286, 305–306 (ST), and 321–326 (GYGYGL).

This sequence belongs to the PDK/BCKDK protein kinase family.

It is found in the mitochondrion matrix. The enzyme catalyses L-seryl-[pyruvate dehydrogenase E1 alpha subunit] + ATP = O-phospho-L-seryl-[pyruvate dehydrogenase E1 alpha subunit] + ADP + H(+). In terms of biological role, inhibits the mitochondrial pyruvate dehydrogenase complex by phosphorylation of the E1 alpha subunit, thus contributing to the regulation of glucose metabolism. This is [Pyruvate dehydrogenase (acetyl-transferring)] kinase, mitochondrial from Ascaris suum (Pig roundworm).